A 299-amino-acid polypeptide reads, in one-letter code: MVQRWWEITVTCQAEAEELVYWRLQSFGCQGTATQLQQGRVLIQGYVPQQRVSLLDIAALGVWIEQDVVAQGYLSPKLHWQLVNEQDWAHSWQAYWHPIPVGDRLLICPAWEMPPLDNTRLVIKLDPGMAFGTGTHETTQLCLEALEMQLDQTFEPLPPTVIADIGCGSGILAIASLLLGAQKAYAVDTSDLAVTATQRNAELNGIRADQLIVHQGSWEQVLELVDGVVCNILAPVIIEILPHLPAIVKPKGWGIFSGILLDQADRVAEQLKRQGWSLGSVWRRNEWCCLNARFERLPD.

S-adenosyl-L-methionine contacts are provided by Thr-139, Gly-166, Asp-188, and Asn-231.

This sequence belongs to the methyltransferase superfamily. PrmA family.

The protein localises to the cytoplasm. The catalysed reaction is L-lysyl-[protein] + 3 S-adenosyl-L-methionine = N(6),N(6),N(6)-trimethyl-L-lysyl-[protein] + 3 S-adenosyl-L-homocysteine + 3 H(+). Functionally, methylates ribosomal protein L11. The protein is Ribosomal protein L11 methyltransferase of Thermosynechococcus vestitus (strain NIES-2133 / IAM M-273 / BP-1).